Here is a 431-residue protein sequence, read N- to C-terminus: Putative transcription factor R429 (431 aa).

Positions 28–95 (NKFENMSKAL…SIENCSESLD (68 aa)) form a coiled coil. The disordered stretch occupies residues 142–187 (SQQENSSESNNDIVKNGTGGSTSKRKKIQPSNRCSGSKTGKVTETK). The segment covering 143-152 (QQENSSESNN) has biased composition (low complexity). Residues 170–181 (QPSNRCSGSKTG) show a composition bias toward polar residues. A zinc finger spans residues 218–241 (CSVPDCDGEKILNQNDGYMVCKKC).

The protein belongs to the nucleo-cytoplasmic large DNA viruses (NCLDVs) VLTF-3 family.

Functionally, putative transcription factor. The protein is Putative transcription factor R429 of Acanthamoeba polyphaga (Amoeba).